The chain runs to 492 residues: Cell death protein 6 (492 aa).

Positions 19–29 (GNNINGEGSSS) are enriched in low complexity. The tract at residues 19-38 (GNNINGEGSSSPSTSAPQVK) is disordered. The region spanning 55–215 (INGHVEYVAR…YILKKKIVEL (161 aa)) is the PID domain. Disordered stretches follow at residues 241-385 (TGPP…STAA) and 464-492 (TGDL…NLKQ). Over residues 244 to 268 (PIYPGLGPPALPLSPMPQGPPPNIP) the composition is skewed to pro residues. The segment covering 300-312 (ASPSVSPASTSPS) has biased composition (low complexity). Over residues 313-333 (GPAPSIPPPRPPALAPPPPVA) the composition is skewed to pro residues. A compositionally biased stretch (basic and acidic residues) spans 373-383 (FDPRAGEKKST).

It belongs to the ced-6 family. Homodimer. Interacts with ced-1. Interacts with E3 ubiquitin-protein ligase trim-21. Detected in gonadal sheath cells.

The protein resides in the cytoplasm. May function as an adapter protein in a pathway that mediates recognition and phagocytosis of apoptotic cells during normal development. Promotes engulfment of cells at both early and late stages of apoptosis. Required for actin reorganization around apoptotic cells. Plays a role in protecting dopaminergic neurons from oxidative stress-induced degeneration. Mediates recruitment of E3 ubiquitin-protein ligase trim-21 to the apoptotic cell surface which promotes ubiquitination and degradation of ced-1. The polypeptide is Cell death protein 6 (Caenorhabditis elegans).